We begin with the raw amino-acid sequence, 793 residues long: Copalyl diphosphate synthase CPS1, chloroplastic (793 aa).

A chloroplast-targeting transit peptide spans 1-59; that stretch reads MASLSSTILSRSPAARRRITPASAKLHRPECFATSAWMGSSSKNLSLSYQLNHKKISVA. Lys238 is a binding site for substrate. Mg(2+)-binding residues include Asp370 and Asp372. The DXDD motif signature appears at 370-373; it reads DIDD. Substrate is bound at residue Lys457.

It belongs to the terpene synthase family. Mg(2+) serves as cofactor.

Its subcellular location is the plastid. The protein localises to the chloroplast. It carries out the reaction (2E,6E,10E)-geranylgeranyl diphosphate = (+)-copalyl diphosphate. It functions in the pathway secondary metabolite biosynthesis; terpenoid biosynthesis. Functionally, involved in tanshinone biosynthesis in hairy roots. Catalyzes the conversion of geranylgeranyl diphosphate (GGPP) to copalyl diphosphate (CPP). The polypeptide is Copalyl diphosphate synthase CPS1, chloroplastic (Salvia miltiorrhiza (Chinese sage)).